A 112-amino-acid polypeptide reads, in one-letter code: MGRQVTPIYPRTNGTIQPVNFPIRNMEPPNHSLQSAGFQIPPPDAQFPRYHAAAPHHPRVEAAAPSCLDVARHVESCPICSRIHDTDKTLYVLVIVGLTILCFLLVKRILKL.

Residues 89–106 traverse the membrane as a helical segment; the sequence is TLYVLVIVGLTILCFLLV.

This sequence belongs to the IIV-6 466R family.

It localises to the membrane. This is an uncharacterized protein from Aedes vexans (Inland floodwater mosquito).